The chain runs to 380 residues: Cytochrome b (380 aa).

Helical transmembrane passes span 34–54 (FGSL…LLAM), 78–99 (WLIR…YLHI), 114–134 (WNTG…GYVL), and 179–199 (FFAL…IHLT). Positions 84 and 98 each coordinate heme b. Residues His183 and His197 each coordinate heme b. Position 202 (His202) interacts with a ubiquinone. 4 helical membrane-spanning segments follow: residues 227-247 (LKDT…ALFS), 289-309 (LGGV…PLLH), 321-341 (LSQL…WVGS), and 348-368 (FIII…ILLP).

This sequence belongs to the cytochrome b family. The cytochrome bc1 complex contains 11 subunits: 3 respiratory subunits (MT-CYB, CYC1 and UQCRFS1), 2 core proteins (UQCRC1 and UQCRC2) and 6 low-molecular weight proteins (UQCRH/QCR6, UQCRB/QCR7, UQCRQ/QCR8, UQCR10/QCR9, UQCR11/QCR10 and a cleavage product of UQCRFS1). This cytochrome bc1 complex then forms a dimer. Requires heme b as cofactor.

It localises to the mitochondrion inner membrane. In terms of biological role, component of the ubiquinol-cytochrome c reductase complex (complex III or cytochrome b-c1 complex) that is part of the mitochondrial respiratory chain. The b-c1 complex mediates electron transfer from ubiquinol to cytochrome c. Contributes to the generation of a proton gradient across the mitochondrial membrane that is then used for ATP synthesis. This is Cytochrome b (MT-CYB) from Fregetta tropica (Black-bellied storm-petrel).